The sequence spans 389 residues: Putative F-box protein At1g47790 (389 aa).

The F-box domain occupies 19-65 (SKPTSSFPLDLASEILLRLPVKSVVRFRCVSKLWSSIITDPYFIKTY).

This Arabidopsis thaliana (Mouse-ear cress) protein is Putative F-box protein At1g47790.